Reading from the N-terminus, the 333-residue chain is Transmembrane protein I329L (333 aa).

An N-terminal signal peptide occupies residues 1-31; it reads MLRVFIFFVFLGSGLTGRIKPQITCKYFISE. N-linked (GlcNAc...) asparagine; by host glycosylation is found at N32, N39, N44, N76, N82, and N101. Topologically, residues 32-239 are extracellular; it reads NNTWYKYNVT…NTERYKSCYP (208 aa). An LRR repeat occupies 112-133; that stretch reads ELKFLDLRYNDLQVIEYNILRK. Residues N181, N185, and N219 are each glycosylated (N-linked (GlcNAc...) asparagine; by host). C195 and C237 are oxidised to a cystine. The helical transmembrane segment at 240-260 threads the bilayer; that stretch reads LVFISILCSCISFLFLFICLL. Residues 261–333 are Cytoplasmic-facing; it reads RSICKKYSCT…EKKVSCSRRK (73 aa).

Belongs to the asfivirus I329L family. In terms of processing, highly glycosylated.

The protein resides in the host endoplasmic reticulum membrane. Its subcellular location is the host Golgi apparatus membrane. Functionally, viral TLR3 homolog that probably prevents TLR3 dimerization and subsequent induction of IFN. Inhibits dsRNA-stimulated activation of NF-kB and IRF3. In Ornithodoros (relapsing fever ticks), this protein is Transmembrane protein I329L.